The sequence spans 1144 residues: MDSVIIEPDEREALASLVPAHPLPPRKTHSYVEQCEQKPHHPIRKYSLDEGSRSVTSDSEAVYFDSSDGEFSTEGVAIVDGRTSGERGNGEECGFVTPPSKPASQGGGNDGGREDDIESLPEFIGAGGGLDVFKVPVRAAVNPGRPPCLELRPHPLRETQTGKFLRNIACTESQLWAGQENGVRFWNLEEAYEVGCGLGGQVRRGDEDTAPFHESVPTSPALCLLVDHGNRLVWTGHKDGKIRAWKMNQPNTTTADDSKPFKERLSWQAHRGPVNYIVISSYGDMWSCSDGGVIKIWTLDSLEKSLVLKLEEKHMAALLVERSGIDLRSQVTVNGTCSISSSDVKFLLVDTVKAKVWAVQHLSFSLWDAQNKELLKVFNIDGQVENRVDMPPTQGQQVEDTKAKFFSAPKKEKSQGFLQRSRHAIMGAAGAVRRAATRSAGAFAEDTRKVEAIAIAADGSIWTGSMNGVIAQWDGNGSRLREVNHHQQAVLCFCTFGDRIYVGYSSGYIQVLDLGGKLIASWVSHNEPVIKLAAGGGFIFSLATHGGVRGWYVTSPGPLDSLIRTELSQKEMAYARQDSVKILIGTWNVGEGRASRGALVSWLGSAVSDVGIVAIGLQEVDMGAGFLAMSTAKETVGVEGSAVGQWWLDAIGNALDERNTFERMGSRQLAGLLISLWVRKSIRTHVGDLDVAAVPCGFGRAIGNKGGVGLRIRVYDRIMCFVNCHLAAHLEAVTRRNADFNHIYRSMVFSKGQSVYTAAAAGASTSAQALKNNPNTNNSTEEEKSHLASADLVAFFGDFNYRLFGITYDEARDFISHRSFDWLREKDQLRQEMNEGKVFQGMREALITFPPTYKFEKNKPGLGGYDSGEKKRIPAWCDRVIYRDNQSISYTECSLKCPVVSSTIMYEACMDVTESDHKPVRCKLHANIAHTDKSVRRQELGKIVKSNEKLRAMFEELKSVPETSVSTNNILLHSQDTFIFTIRNTSNSSRAIFNIVCKGQTLVREDGEEPDNHSRGTFGLPRWLEVSPGAGIIKPDASLQVKVHHEDSHNSEEFIDGIQQNSLSEESSDKEVTLIIIVQGSCSTRTISHSIKVRHCSSAAKSLSLVHSKTTTMTKNLEGSTRYQTDANRGGSTRHRTDDSTRRG.

Disordered regions lie at residues 15–67 and 81–118; these read ASLV…FDSS and GRTS…DDIE. 5 WD repeats span residues 158–196, 216–255, 269–307, 445–483, and 524–561; these read ETQT…EVGC, VPTS…TTTA, AHRG…KSLV, EDTR…LREV, and SHNE…PLDS. Catalytic regions lie at residues 791 to 807 and 870 to 885; these read DLVA…FGIT and KKRI…YRDN. Lys-949 is covalently cross-linked (Glycyl lysine isopeptide (Lys-Gly) (interchain with G-Cter in ubiquitin)). Residues 1111 to 1131 are compositionally biased toward polar residues; it reads TTMTKNLEGSTRYQTDANRGG. Residues 1111 to 1144 form a disordered region; that stretch reads TTMTKNLEGSTRYQTDANRGGSTRHRTDDSTRRG. The segment covering 1135–1144 has biased composition (basic and acidic residues); sequence HRTDDSTRRG.

The protein belongs to the inositol polyphosphate 5-phosphatase family. The cofactor is Mg(2+). In terms of tissue distribution, expressed in young seedlings and flowers.

It catalyses the reaction a 1,2-diacyl-sn-glycero-3-phospho-(1D-myo-inositol-4,5-bisphosphate) + H2O = a 1,2-diacyl-sn-glycero-3-phospho-(1D-myo-inositol 4-phosphate) + phosphate. It carries out the reaction a 1,2-diacyl-sn-glycero-3-phospho-(1D-myo-inositol-3,4,5-trisphosphate) + H2O = a 1,2-diacyl-sn-glycero-3-phospho-(1D-myo-inositol-3,4-bisphosphate) + phosphate. The enzyme catalyses 1D-myo-inositol 1,4,5-trisphosphate + H2O = 1D-myo-inositol 1,4-bisphosphate + phosphate. Has phosphatase activity toward PtdIns(4,5)P2, PtdIns(3,4,5)P3 and Ins(1,4,5)P3. The polypeptide is Type II inositol polyphosphate 5-phosphatase 14 (Arabidopsis thaliana (Mouse-ear cress)).